Here is a 212-residue protein sequence, read N- to C-terminus: Uridine kinase (212 aa).

Gly13–Thr20 lines the ATP pocket.

Belongs to the uridine kinase family.

It localises to the cytoplasm. It carries out the reaction uridine + ATP = UMP + ADP + H(+). It catalyses the reaction cytidine + ATP = CMP + ADP + H(+). The protein operates within pyrimidine metabolism; CTP biosynthesis via salvage pathway; CTP from cytidine: step 1/3. It functions in the pathway pyrimidine metabolism; UMP biosynthesis via salvage pathway; UMP from uridine: step 1/1. In Bacillus cytotoxicus (strain DSM 22905 / CIP 110041 / 391-98 / NVH 391-98), this protein is Uridine kinase.